Reading from the N-terminus, the 412-residue chain is Alanyl-tRNA editing protein Aarsd1-B (412 aa).

Positions 108, 112, 208, and 212 each coordinate Zn(2+).

The protein belongs to the class-II aminoacyl-tRNA synthetase family. Alax-L subfamily. Zn(2+) serves as cofactor.

It is found in the cytoplasm. Functionally, functions in trans to edit the amino acid moiety from incorrectly charged tRNA(Ala). This chain is Alanyl-tRNA editing protein Aarsd1-B (aarsd1-b), found in Xenopus laevis (African clawed frog).